The chain runs to 85 residues: Large ribosomal subunit protein bL31B (85 aa).

It belongs to the bacterial ribosomal protein bL31 family. Type B subfamily. In terms of assembly, part of the 50S ribosomal subunit.

The polypeptide is Large ribosomal subunit protein bL31B (Aliivibrio salmonicida (strain LFI1238) (Vibrio salmonicida (strain LFI1238))).